Reading from the N-terminus, the 417-residue chain is MDKLKISANGPLNGEITVSGAKNAALPLMCAGLLTSGTLRLKNVPMLADVKTTQKLLQGMGARVLTDNISEFEINGGTVNNTCAPYELVRTMRASILVLGPTLARFGEAQVSLPGGCAIGSRPVDQHLKGLEAMGAEIVIEHGYVKAKGKLKGTRVAMDVVTVGGTENLLMAATLAEGTTVLENCAIEPEVVDLAECLVKMGAKISGIGTSTMIVEGVDELQGCEHSVVPDRIEAGTFLCAVAITGGRVVLRNAAPKTMEVVLDKLVEAGAVIEAGDDWIAIDMRQRPKAVDIRTVVHPGFPTDMQAQFMALNAVAEGSCRVVETIFENRFMHVPELNRMGANITTEGNTAFVQGVEQLSGAVVKATDLRASASLVIAGLAARGETVVEQIYHLDRGYENIEKKLGSVGAKIERVSG.

Residue 22 to 23 coordinates phosphoenolpyruvate; the sequence is KN. Residue Arg93 participates in UDP-N-acetyl-alpha-D-glucosamine binding. The active-site Proton donor is the Cys117. At Cys117 the chain carries 2-(S-cysteinyl)pyruvic acid O-phosphothioketal. Residues 122–126, Asp304, and Ile326 each bind UDP-N-acetyl-alpha-D-glucosamine; that span reads RPVDQ.

Belongs to the EPSP synthase family. MurA subfamily.

The protein resides in the cytoplasm. The catalysed reaction is phosphoenolpyruvate + UDP-N-acetyl-alpha-D-glucosamine = UDP-N-acetyl-3-O-(1-carboxyvinyl)-alpha-D-glucosamine + phosphate. It functions in the pathway cell wall biogenesis; peptidoglycan biosynthesis. Functionally, cell wall formation. Adds enolpyruvyl to UDP-N-acetylglucosamine. The chain is UDP-N-acetylglucosamine 1-carboxyvinyltransferase from Neisseria meningitidis serogroup B (strain ATCC BAA-335 / MC58).